Consider the following 182-residue polypeptide: UPF0397 protein SPH_0594 (182 aa).

5 helical membrane-spanning segments follow: residues 10–30 (VVAV…NIPT), 46–66 (LLSI…GHAI), 73–93 (YGLW…VGLF), 109–129 (ILIF…VLAP), and 148–168 (IVAG…LLLA).

The protein belongs to the UPF0397 family.

The protein localises to the cell membrane. The protein is UPF0397 protein SPH_0594 of Streptococcus pneumoniae (strain Hungary19A-6).